Reading from the N-terminus, the 228-residue chain is Cytochrome c oxidase subunit 2 (228 aa).

Residues 1–26 (MSTWANLGLQDSASPLMEQLIFFHDH) are Mitochondrial intermembrane-facing. Residues 27 to 48 (ALLILVMITVLVGYLMFMLFFN) form a helical membrane-spanning segment. Residues 49–62 (NYVNRFLLHGQLIE) are Mitochondrial matrix-facing. The helical transmembrane segment at 63-82 (MIWTILPAIILLFIALPSLR) threads the bilayer. The Mitochondrial intermembrane portion of the chain corresponds to 83-228 (LLYLLDEINE…FIKWISSNNS (146 aa)). Cu cation contacts are provided by histidine 161, cysteine 196, glutamate 198, cysteine 200, histidine 204, and methionine 207. Glutamate 198 contacts Mg(2+).

Belongs to the cytochrome c oxidase subunit 2 family. As to quaternary structure, component of the cytochrome c oxidase (complex IV, CIV), a multisubunit enzyme composed of a catalytic core of 3 subunits and several supernumerary subunits. The complex exists as a monomer or a dimer and forms supercomplexes (SCs) in the inner mitochondrial membrane with ubiquinol-cytochrome c oxidoreductase (cytochrome b-c1 complex, complex III, CIII). Cu cation is required as a cofactor.

It is found in the mitochondrion inner membrane. The catalysed reaction is 4 Fe(II)-[cytochrome c] + O2 + 8 H(+)(in) = 4 Fe(III)-[cytochrome c] + 2 H2O + 4 H(+)(out). In terms of biological role, component of the cytochrome c oxidase, the last enzyme in the mitochondrial electron transport chain which drives oxidative phosphorylation. The respiratory chain contains 3 multisubunit complexes succinate dehydrogenase (complex II, CII), ubiquinol-cytochrome c oxidoreductase (cytochrome b-c1 complex, complex III, CIII) and cytochrome c oxidase (complex IV, CIV), that cooperate to transfer electrons derived from NADH and succinate to molecular oxygen, creating an electrochemical gradient over the inner membrane that drives transmembrane transport and the ATP synthase. Cytochrome c oxidase is the component of the respiratory chain that catalyzes the reduction of oxygen to water. Electrons originating from reduced cytochrome c in the intermembrane space (IMS) are transferred via the dinuclear copper A center (CU(A)) of subunit 2 and heme A of subunit 1 to the active site in subunit 1, a binuclear center (BNC) formed by heme A3 and copper B (CU(B)). The BNC reduces molecular oxygen to 2 water molecules using 4 electrons from cytochrome c in the IMS and 4 protons from the mitochondrial matrix. The polypeptide is Cytochrome c oxidase subunit 2 (mt:CoII) (Drosophila simulans (Fruit fly)).